A 261-amino-acid chain; its full sequence is Enolase-phosphatase E1 (261 aa).

Residues aspartate 16 and glutamate 18 each contribute to the Mg(2+) site. Substrate contacts are provided by residues serine 150 to serine 151 and lysine 184. Position 209 (aspartate 209) interacts with Mg(2+).

It belongs to the HAD-like hydrolase superfamily. MasA/MtnC family. As to quaternary structure, monomer. Requires Mg(2+) as cofactor.

The protein resides in the cytoplasm. It localises to the nucleus. It carries out the reaction 5-methylsulfanyl-2,3-dioxopentyl phosphate + H2O = 1,2-dihydroxy-5-(methylsulfanyl)pent-1-en-3-one + phosphate. The protein operates within amino-acid biosynthesis; L-methionine biosynthesis via salvage pathway; L-methionine from S-methyl-5-thio-alpha-D-ribose 1-phosphate: step 3/6. It functions in the pathway amino-acid biosynthesis; L-methionine biosynthesis via salvage pathway; L-methionine from S-methyl-5-thio-alpha-D-ribose 1-phosphate: step 4/6. Bifunctional enzyme that catalyzes the enolization of 2,3-diketo-5-methylthiopentyl-1-phosphate (DK-MTP-1-P) into the intermediate 2-hydroxy-3-keto-5-methylthiopentenyl-1-phosphate (HK-MTPenyl-1-P), which is then dephosphorylated to form the acireductone 1,2-dihydroxy-3-keto-5-methylthiopentene (DHK-MTPene). This Rattus norvegicus (Rat) protein is Enolase-phosphatase E1 (Enoph1).